Reading from the N-terminus, the 362-residue chain is Peptide chain release factor 1 (362 aa).

Gln-237 carries the post-translational modification N5-methylglutamine.

It belongs to the prokaryotic/mitochondrial release factor family. In terms of processing, methylated by PrmC. Methylation increases the termination efficiency of RF1.

It localises to the cytoplasm. Functionally, peptide chain release factor 1 directs the termination of translation in response to the peptide chain termination codons UAG and UAA. This chain is Peptide chain release factor 1, found in Aliivibrio salmonicida (strain LFI1238) (Vibrio salmonicida (strain LFI1238)).